The primary structure comprises 637 residues: Biosynthetic arginine decarboxylase (637 aa).

Lys-101 bears the N6-(pyridoxal phosphate)lysine mark. Residue Val-286–Tyr-296 coordinates substrate.

It belongs to the Orn/Lys/Arg decarboxylase class-II family. SpeA subfamily. Mg(2+) serves as cofactor. The cofactor is pyridoxal 5'-phosphate.

The enzyme catalyses L-arginine + H(+) = agmatine + CO2. It functions in the pathway amine and polyamine biosynthesis; agmatine biosynthesis; agmatine from L-arginine: step 1/1. In terms of biological role, catalyzes the biosynthesis of agmatine from arginine. The sequence is that of Biosynthetic arginine decarboxylase from Marinobacter nauticus (strain ATCC 700491 / DSM 11845 / VT8) (Marinobacter aquaeolei).